Consider the following 1456-residue polypeptide: RNA replication protein (1456 aa).

Positions 59 to 224 (NPYSIELHTH…HHEFTDLQWL (166 aa)) constitute an Alphavirus-like MT domain. Disordered regions lie at residues 474–499 (DLAG…EKKE), 513–563 (RKHN…DLPG), and 581–600 (QKWE…TEII). The segment covering 480-489 (GNNQEETSTA) has biased composition (polar residues). Residues 513-528 (RKHNRETRSRAAKKAK) show a composition bias toward basic residues. Over residues 529 to 547 (RLAEIQDSMNRDRTEEGSH) the composition is skewed to basic and acidic residues. A compositionally biased stretch (polar residues) spans 586 to 595 (ASSTDSSTID). In terms of domain architecture, (+)RNA virus helicase ATP-binding spans 695–862 (DVKNKRIGAI…VFAKYCRYYL (168 aa)). Position 735–742 (735–742 (GAGGSGKS)) interacts with ATP. Positions 863-997 (NATHRNKKDL…VVREHALKEY (135 aa)) constitute a (+)RNA virus helicase C-terminal domain. Residues 1236–1343 (RPSLANDYTA…DCVPEVKQSF (108 aa)) form the RdRp catalytic domain.

It belongs to the potexvirus/carlavirus RNA replication protein family.

The catalysed reaction is RNA(n) + a ribonucleoside 5'-triphosphate = RNA(n+1) + diphosphate. It carries out the reaction ATP + H2O = ADP + phosphate + H(+). Functionally, RNA replication. The central part of this protein possibly functions as an ATP-binding helicase. In Brassica campestris (Field mustard), this protein is RNA replication protein.